Here is a 97-residue protein sequence, read N- to C-terminus: MSYLILSIVILLIGILGIILNRSNLIIMLMCVELVLLASTILLLFESRVLYTLFGQIFAIVILTVAAAESAIGLAIMVNYYRLRGTIAVRASNLLRG.

Transmembrane regions (helical) follow at residues 1-21 (MSYL…IILN), 25-45 (LIIM…LLLF), and 57-77 (IFAI…LAIM).

Belongs to the complex I subunit 4L family.

Its subcellular location is the mitochondrion membrane. It carries out the reaction a ubiquinone + NADH + 5 H(+)(in) = a ubiquinol + NAD(+) + 4 H(+)(out). Its function is as follows. Core subunit of the mitochondrial membrane respiratory chain NADH dehydrogenase (Complex I) that is believed to belong to the minimal assembly required for catalysis. Complex I functions in the transfer of electrons from NADH to the respiratory chain. The immediate electron acceptor for the enzyme is believed to be ubiquinone. In Sarcophyton glaucum (Toadstool umbrella leather coral), this protein is NADH-ubiquinone oxidoreductase chain 4L (ND4L).